The primary structure comprises 422 residues: Protein MANNAN SYNTHESIS-RELATED 1 (422 aa).

Topologically, residues 1–6 are cytoplasmic; the sequence is MGVDLR. The helical; Signal-anchor for type II membrane protein transmembrane segment at 7 to 26 threads the bilayer; sequence QVVAGILTITMFVMLGQMLH. Residues 27 to 422 lie on the Lumenal side of the membrane; the sequence is RDYFDSLQEK…KNHLAYSCFC (396 aa). Substrate is bound at residue 263 to 265; that stretch reads DLR.

It belongs to the glycosyltransferase GT106 family. Widely expressed.

The protein localises to the golgi apparatus membrane. It functions in the pathway glycan biosynthesis. In terms of biological role, glycosyltransferase involved in mannan biosynthesis. The polypeptide is Protein MANNAN SYNTHESIS-RELATED 1 (Arabidopsis thaliana (Mouse-ear cress)).